We begin with the raw amino-acid sequence, 1218 residues long: Sodium bicarbonate cotransporter 3 (1218 aa).

2 disordered regions span residues 1-31 (MEAD…KTSS) and 53-99 (HVPF…SQRV). The Extracellular segment spans residues 1–612 (MEADGAGEQM…DFKDALSLQC (612 aa)). Residues Ser57, Ser60, Ser89, and Ser155 each carry the phosphoserine modification. Basic residues predominate over residues 60-77 (SRRRHRHRGHKHHHRRRK). Residues 78 to 90 (DKDSDKEDGRESP) show a composition bias toward basic and acidic residues. The N-linked (GlcNAc...) asparagine glycan is linked to Asn176. 3 positions are modified to phosphoserine: Ser238, Ser247, and Arg263. An N-linked (GlcNAc...) asparagine glycan is attached at Asn274. Disordered regions lie at residues 294 to 350 (SRAG…DIPR), 364 to 412 (KGQE…ENST), and 536 to 577 (SIRI…HAGP). Over residues 308 to 318 (VPTPQNSPPSS) the composition is skewed to pro residues. Over residues 319-337 (PSLSRLTSRSSQQTQPQAP) the composition is skewed to low complexity. A compositionally biased stretch (polar residues) spans 383–396 (SPQSAPGNLDSSKS). 3 positions are modified to phosphoserine: Ser386, Ser404, and Ser407. The N-linked (GlcNAc...) asparagine glycan is linked to Asn410. Phosphoserine is present on residues Ser411 and Ser560. The span at 567 to 576 (PPKEADHHAG) shows a compositional bias: basic and acidic residues. The chain crosses the membrane as a helical span at residues 613–633 (LASILFLYCACMSPVITFGGL). Topologically, residues 634–641 (LGEATEGR) are cytoplasmic. The helical transmembrane segment at 642–662 (ISAIESLFGASLTGIAYSLFA) threads the bilayer. At 663–699 (GQPLTILGSTGPVLVFEKILFKFCRDYHLSYLSLRTS) the chain is on the extracellular side. A helical transmembrane segment spans residues 700–720 (IGLWTSFLCIVLVATDASSLV). Residues 721 to 729 (CYITRFTEE) are Cytoplasmic-facing. Residues 730–750 (AFAALICIIFIYEALEKLFHL) form a helical membrane-spanning segment. At 751-821 (GEIYAFNMHN…MFVGSACGPH (71 aa)) the chain is on the extracellular side. Cys770 and Cys772 are disulfide-bonded. 3 N-linked (GlcNAc...) asparagine glycosylation sites follow: Asn780, Asn790, and Asn800. Cysteines 806 and 818 form a disulfide. A helical transmembrane segment spans residues 822–842 (GPYVPDVLFWCVVLFFTTFFL). Over 843-865 (SSFLKQFKTKRYFPTKVRSTISD) the chain is Cytoplasmic. The chain crosses the membrane as a helical span at residues 866-886 (FAVFLTIVIMVAIDYLVGIPS). The Extracellular portion of the chain corresponds to 887-912 (PKLHVPEKFEPTDPSRGWIISPLGDN). A helical transmembrane segment spans residues 913 to 933 (PWWTLLIAAVPALLCTILIFM). Topologically, residues 934 to 958 (DQQITAVIINRKEHKLKKGAGYHLD) are cytoplasmic. A helical transmembrane segment spans residues 959-979 (LLMVAVMLGVCSIMGLPWFVA). Residues 980-1015 (ATVLSISHVNSLKVESECSAPGEQPKFLGIREQRVT) lie on the Extracellular side of the membrane. Residues 1012-1135 (QRVTGLMIFI…MDLCFTKREL (124 aa)) form an essential for cell membrane localization and transport activity region. A helical membrane pass occupies residues 1016 to 1036 (GLMIFILMGLSVFMTSVLKFI). At 1037 to 1038 (PM) the chain is on the cytoplasmic side. A helical membrane pass occupies residues 1039-1059 (PVLYGVFLYMGVSSLKGIQFF). The Extracellular segment spans residues 1060-1096 (DRIKLFGMPAKHQPDLIYLRYVPLWKVHVFTVVQLTC). Phosphoserine is present on residues Met1067 and Leu1078. The chain crosses the membrane as a helical span at residues 1097-1117 (LVLLWVIKASAAAVVFPMMVL). An essential for interaction with RACK1 region spans residues 1118–1140 (ALVFVRKLMDLCFTKRELSWLDD). Topologically, residues 1118–1218 (ALVFVRKLMD…KKYMDAETSL (101 aa)) are cytoplasmic. A CA2-binding region spans residues 1138–1140 (LDD). Basic and acidic residues predominate over residues 1148-1165 (KKEDDKKKKEKEEAERML). The interval 1148 to 1172 (KKEDDKKKKEKEEAERMLQGDGDTV) is disordered. Thr1171 carries the phosphothreonine modification. Residues Ser1180, Thr1188, Ile1201, and Ser1217 each carry the phosphoserine modification. The PDZ-binding signature appears at 1215–1218 (ETSL).

Belongs to the anion exchanger (TC 2.A.31) family. As to quaternary structure, interacts with USH1C. Forms a complex with ATP6V1B1 and NHERF1/EBP50. Interacts in a pH dependent-manner with CA2/carbonic anhydrase 2. Interacts with CFTR probably through NHERF1/EBP50. In terms of assembly, interacts with RACK1. Post-translationally, undergoes lysosome-mediated degradation. In terms of processing, N-glycosylated. Expressed in aorta, ventricles, atrium, mesenteric artery, kidney, spleen, duodenum, jejunum, ileum, colon, lung, trachea, gastric fundus and pylorus, cerebrum, cerebellum, pancreas, liver, parotid gland, and epididymis. Expressed in the inner ear by cochlear outer and inner hair cells (at protein level). Highly expressed in testis and spleen. In terms of tissue distribution, specifically expressed in kidney. As to expression, specifically expressed in hippocampal neurons.

It localises to the basolateral cell membrane. Its subcellular location is the apical cell membrane. The protein localises to the cell projection. It is found in the stereocilium. The protein resides in the cell membrane. The enzyme catalyses hydrogencarbonate(in) + Na(+)(in) = hydrogencarbonate(out) + Na(+)(out). With respect to regulation, insensitive to stilbene derivatives. Functionally, electroneutral sodium- and bicarbonate-dependent cotransporter with a Na(+):HCO3(-) 1:1 stoichiometry. Mediates the sodium-dependent bicarbonate transport important for pH recovery after acid load as well as for regulation of steady-state pH in the duodenum and vascular smooth muscle cells. Plays a key role in macrophage acidification, mediating bicarbonate import into the cytoplasm which is crucial for net acid extrusion and maintenance of cytoplasmic pH during phagocytosis. Provides cellular bicarbonate for de novo purine and pyrimidine synthesis and is a key mediator of de novo nucleotide synthesis downstream of mTORC1 signaling in proliferating cells. In Rattus norvegicus (Rat), this protein is Sodium bicarbonate cotransporter 3 (Slc4a7).